The sequence spans 105 residues: UPF0145 protein Sala_0338 (105 aa).

This sequence belongs to the UPF0145 family.

The chain is UPF0145 protein Sala_0338 from Sphingopyxis alaskensis (strain DSM 13593 / LMG 18877 / RB2256) (Sphingomonas alaskensis).